Reading from the N-terminus, the 371-residue chain is MAQNKPNAFMAFVADWRACNRFGRGLSTSEAVAKCGPIWEGMSDRERGPYKSKAKDSNVLERESKTERLNCPGVAFSKMQVEKNEAIDAELQMKRNIKRIVLKATNSMKLEEEEFLFVSFNYFTKALNGDVYQPAELSACRFSLKGGISSNYSTMINPGHIIFGQTSDAQDHSRTTHKLPLPPNAMGEKNLGNLYSDTLKWLSASNDEEDEQYDHPVIVYTTPELMPVVKSCFRYLACEGDTDKHAKKIIVYDICYLFLTLKKTVLDLVGVPSDHMNIHVTNSFFRRDFFEFSSGIACDYHEEVDRTKYCTKSMVLRWGYMISHYICGDLAIPLQPRKHVPIEVKHSYTVTPGDSSLALDGTSTDSGYSGY.

The segment at residues 2-68 (AQNKPNAFMA…VLERESKTER (67 aa)) is a DNA-binding region (HMG box).

It belongs to the maelstrom family.

The protein localises to the cytoplasm. It localises to the nucleus. Involved both in the piRNA and miRNA metabolic processes. As a component of the meiotic nuage, plays a central role during oogenesis by repressing transposable elements and preventing their mobilization, which is essential for the germline integrity. Repression of transposable elements is mediated via the piRNA metabolic process, which mediates the repression of transposable elements during meiosis by forming complexes composed of piRNAs and Piwi proteins and governs the repression of transposons. As a nuclear component, it is required for proper differentiation in the germline stem cell (GSC) lineage by repressing microRNA-7 (miR-7), thereby acting as an indirect regulator of bag-of-marbles (Bam). Acts by binding to the promoter of miR-7 gene and repressing its expression; miR-7 repression alleviates the Bam repression by miR-7, thereby allowing differentiation in the germline stem cell (GSC) lineage. In Drosophila pseudoobscura pseudoobscura (Fruit fly), this protein is Protein maelstrom 1 (mael1).